Reading from the N-terminus, the 80-residue chain is NAD(P)H-quinone oxidoreductase subunit O (80 aa).

It belongs to the complex I NdhO subunit family. As to quaternary structure, NDH-1 can be composed of about 15 different subunits; different subcomplexes with different compositions have been identified which probably have different functions.

Its subcellular location is the cellular thylakoid membrane. It carries out the reaction a plastoquinone + NADH + (n+1) H(+)(in) = a plastoquinol + NAD(+) + n H(+)(out). The catalysed reaction is a plastoquinone + NADPH + (n+1) H(+)(in) = a plastoquinol + NADP(+) + n H(+)(out). Functionally, NDH-1 shuttles electrons from an unknown electron donor, via FMN and iron-sulfur (Fe-S) centers, to quinones in the respiratory and/or the photosynthetic chain. The immediate electron acceptor for the enzyme in this species is believed to be plastoquinone. Couples the redox reaction to proton translocation, and thus conserves the redox energy in a proton gradient. Cyanobacterial NDH-1 also plays a role in inorganic carbon-concentration. This is NAD(P)H-quinone oxidoreductase subunit O from Prochlorococcus marinus (strain MIT 9515).